A 601-amino-acid polypeptide reads, in one-letter code: Probable inactive receptor kinase At1g27190 (601 aa).

Positions 1-24 (MKKIFITLLWLLFISSFLCSSSSA) are cleaved as a signal peptide. Asn52 carries an N-linked (GlcNAc...) asparagine glycan. LRR repeat units lie at residues 73–95 (RIIS…LKLC), 97–119 (SLQS…ICSW), 122–144 (YLVT…IVEC), 146–169 (FLNA…SRLD), and 170–192 (RLRR…LARF). The helical transmembrane segment at 221 to 241 (IIIVAGVLGAVGSLCVGLVIF) threads the bilayer. Thr298 carries the post-translational modification Phosphothreonine. A Protein kinase domain is found at 301 to 586 (FSSGNIDVSS…KNMADKHGVS (286 aa)). ATP contacts are provided by residues 307–315 (DVSSRTGVS) and Lys329. At Ser383 the chain carries Phosphoserine. Thr399 is subject to Phosphothreonine. At Tyr476 the chain carries Phosphotyrosine. Ser478 carries the phosphoserine modification. A Phosphothreonine modification is found at Thr479. 2 positions are modified to phosphoserine: Ser483 and Ser586.

This sequence belongs to the protein kinase superfamily. Ser/Thr protein kinase family.

The protein localises to the membrane. The protein is Probable inactive receptor kinase At1g27190 of Arabidopsis thaliana (Mouse-ear cress).